Here is a 176-residue protein sequence, read N- to C-terminus: ATP-dependent protease subunit HslV (176 aa).

Thr2 is an active-site residue. Na(+) contacts are provided by Gly157, Cys160, and Thr163.

This sequence belongs to the peptidase T1B family. HslV subfamily. As to quaternary structure, a double ring-shaped homohexamer of HslV is capped on each side by a ring-shaped HslU homohexamer. The assembly of the HslU/HslV complex is dependent on binding of ATP.

The protein localises to the cytoplasm. It carries out the reaction ATP-dependent cleavage of peptide bonds with broad specificity.. With respect to regulation, allosterically activated by HslU binding. Functionally, protease subunit of a proteasome-like degradation complex believed to be a general protein degrading machinery. In Pseudomonas fluorescens (strain ATCC BAA-477 / NRRL B-23932 / Pf-5), this protein is ATP-dependent protease subunit HslV.